Reading from the N-terminus, the 228-residue chain is Ephrin-A5 (228 aa).

A signal peptide spans 1-20; sequence MLHVEMLTLLFLVLWMCVFS. An Ephrin RBD domain is found at 29–162; sequence ADRYAVYWNS…KLKVFVRPTN (134 aa). N-linked (GlcNAc...) asparagine glycosylation is present at Asn37. 2 disulfides stabilise this stretch: Cys62–Cys102 and Cys90–Cys151. Positions 186–205 are disordered; the sequence is EPADDTVHESAEPSRGENAA. The segment covering 190 to 200 has biased composition (basic and acidic residues); it reads DTVHESAEPSR. The GPI-anchor amidated asparagine moiety is linked to residue Asn203. Residues 204 to 228 constitute a propeptide, removed in mature form; the sequence is AAQTPRIPSRLLAILLFLLAMLLTL.

This sequence belongs to the ephrin family. Binds to the receptor tyrosine kinases EPHA2, EPHA3, EPHB1 and EPHB2. Interacts with EPHA8; activates EPHA8. Forms a ternary EFNA5-EPHA3-ADAM10 complex mediating EFNA5 extracellular domain shedding by ADAM10 which regulates the EFNA5-EPHA3 complex internalization and function. In terms of tissue distribution, expressed in brain, heart, placenta and lung.

Its subcellular location is the cell membrane. It is found in the membrane. The protein resides in the caveola. Its function is as follows. Cell surface GPI-bound ligand for Eph receptors, a family of receptor tyrosine kinases which are crucial for migration, repulsion and adhesion during neuronal, vascular and epithelial development. Binds promiscuously Eph receptors residing on adjacent cells, leading to contact-dependent bidirectional signaling into neighboring cells. The signaling pathway downstream of the receptor is referred to as forward signaling while the signaling pathway downstream of the ephrin ligand is referred to as reverse signaling. Induces compartmentalized signaling within a caveolae-like membrane microdomain when bound to the extracellular domain of its cognate receptor. This signaling event requires the activity of the Fyn tyrosine kinase. Activates the EPHA3 receptor to regulate cell-cell adhesion and cytoskeletal organization. With the receptor EPHA2 may regulate lens fiber cells shape and interactions and be important for lens transparency maintenance. May function actively to stimulate axon fasciculation. The interaction of EFNA5 with EPHA5 also mediates communication between pancreatic islet cells to regulate glucose-stimulated insulin secretion. Cognate/functional ligand for EPHA7, their interaction regulates brain development modulating cell-cell adhesion and repulsion. The chain is Ephrin-A5 (Efna5) from Rattus norvegicus (Rat).